A 266-amino-acid chain; its full sequence is Enoyl-CoA hydratase EchA19 (266 aa).

Residue E120 is part of the active site. K135 bears the N6-succinyllysine mark. Residue E140 is part of the active site. At K142 the chain carries N6-succinyllysine.

This sequence belongs to the enoyl-CoA hydratase/isomerase family. As to quaternary structure, homotrimer; substrate probably binds in elongated tunnels between the subunits. Succinylated in vitro at pH 8.1, succinylation reduces specific activity of the enzyme 5.5-fold; succinyl-CoA is a downstream by-product of cholesterol degradation. Can be de-succinylated in vitro by NAD-dependent protein deacylase (AC P9WGG3). Succinylation may be a negative feedback regulator of cholesterol metabolism.

The catalysed reaction is (22E)-3-oxochola-4,22-dien-24-oyl-CoA + H2O = (22R)-hydroxy-3-oxo-chol-4-ene-24-oyl-CoA. It functions in the pathway steroid metabolism; cholesterol degradation. Degradation of the cholesterol side chain involves 3 multistep beta-oxidation cycles, this may be involved in the second cycle. Hydrates 3-OCDO-CoA ((22E)-3-oxo-chol-4,22-dien-24-oyl-CoA) to make (22R)-HOCO-CoA (3-oxo-chol-4-ene-(22R)-hydroxy-24-oyl-CoA). Also acts on octenoyl-CoA. Not active on (E)-3-OCDS-CoA ((E)-3-oxocholest-4,24-dien-26-oyl-CoA) or 3-OPDC-CoA (3-oxo-4,17-pregnadiene-20-carboxyl-CoA). Hydrates the same substrate as ChsH3, but the 2 enzymes make different stereoisomers of the product. This chain is Enoyl-CoA hydratase EchA19, found in Mycobacterium tuberculosis (strain ATCC 25618 / H37Rv).